The following is a 157-amino-acid chain: SsrA-binding protein (157 aa).

This sequence belongs to the SmpB family.

The protein resides in the cytoplasm. In terms of biological role, required for rescue of stalled ribosomes mediated by trans-translation. Binds to transfer-messenger RNA (tmRNA), required for stable association of tmRNA with ribosomes. tmRNA and SmpB together mimic tRNA shape, replacing the anticodon stem-loop with SmpB. tmRNA is encoded by the ssrA gene; the 2 termini fold to resemble tRNA(Ala) and it encodes a 'tag peptide', a short internal open reading frame. During trans-translation Ala-aminoacylated tmRNA acts like a tRNA, entering the A-site of stalled ribosomes, displacing the stalled mRNA. The ribosome then switches to translate the ORF on the tmRNA; the nascent peptide is terminated with the 'tag peptide' encoded by the tmRNA and targeted for degradation. The ribosome is freed to recommence translation, which seems to be the essential function of trans-translation. In Chlorobaculum tepidum (strain ATCC 49652 / DSM 12025 / NBRC 103806 / TLS) (Chlorobium tepidum), this protein is SsrA-binding protein.